The primary structure comprises 411 residues: Ubiquitin-binding protein CUE5 (411 aa).

Residues 1 to 12 (MEEKEGIKDSSL) show a composition bias toward basic and acidic residues. 2 disordered regions span residues 1–102 (MEEK…NPIL) and 142–411 (ESGK…DDEM). Lys-15 participates in a covalent cross-link: Glycyl lysine isopeptide (Lys-Gly) (interchain with G-Cter in ubiquitin). 2 positions are modified to phosphoserine: Ser-21 and Ser-36. The segment covering 25 to 58 (DISKTTDVDLNSDGKKDNDTSAKDGTPKVEEKVN) has biased composition (basic and acidic residues). A Glycyl lysine isopeptide (Lys-Gly) (interchain with G-Cter in ubiquitin) cross-link involves residue Lys-59. Position 70 is a phosphothreonine (Thr-70). Lys-76 is covalently cross-linked (Glycyl lysine isopeptide (Lys-Gly) (interchain with G-Cter in ubiquitin)). Ser-91 is modified (phosphoserine). Residues 97–140 (KENPILQELKDAFPNLEEKYIKAVIIASQGVLSPAFNALLFLSD) form the CUE domain. Lys-156 participates in a covalent cross-link: Glycyl lysine isopeptide (Lys-Gly) (interchain with G-Cter in ubiquitin). Position 167 is a phosphothreonine (Thr-167). Over residues 209–219 (NPNEREQHHED) the composition is skewed to basic and acidic residues. Ser-220 carries the phosphoserine modification. The segment covering 230–242 (VEKDLPELTDRAG) has biased composition (basic and acidic residues). Polar residues predominate over residues 245–256 (LQDTANKVSNWI). Residues Ser-309 and Ser-318 each carry the phosphoserine modification. Thr-346 is modified (phosphothreonine). Ser-348 is modified (phosphoserine). Thr-352 bears the Phosphothreonine mark. Lys-354 participates in a covalent cross-link: Glycyl lysine isopeptide (Lys-Gly) (interchain with G-Cter in ubiquitin). Phosphothreonine is present on residues Thr-364 and Thr-367. The AIM signature appears at 373 to 376 (WQPL). Lys-396 is covalently cross-linked (Glycyl lysine isopeptide (Lys-Gly) (interchain with G-Cter in ubiquitin)). The span at 399–411 (DEDEFLINSDDEM) shows a compositional bias: acidic residues. Ser-407 carries the phosphoserine modification.

Interacts with ATG8 (via AIM motif), CLB2, and ubiquitin (via CUE domain).

The protein resides in the cytoplasm. In terms of biological role, connects the ubiquitin pathway to autophagy by functioning as a ubiquitin-ATG8 adapter and thus mediating autophagic clearance of ubiquitin conjugates under starvation conditions. The CUE5-dependent selective autophagy pathway plays an important role in clearance of cytotoxic protein aggregates. Not required for cytoplasmic to vacuole pathway (cvt), mitophagy, pexophagy, or ribophagy. This Saccharomyces cerevisiae (strain ATCC 204508 / S288c) (Baker's yeast) protein is Ubiquitin-binding protein CUE5.